A 186-amino-acid polypeptide reads, in one-letter code: Probable calcium-binding protein CML25 (186 aa).

A compositionally biased stretch (low complexity) spans 1 to 17 (MFNKNQGSNGGSSSNVG). Residues 1–23 (MFNKNQGSNGGSSSNVGIGADSP) are disordered. 4 consecutive EF-hand domains span residues 33–68 (TEIRELEAVFKKFDVNGDGKISSKELGAIMTSLGHE), 69–104 (VPEEELEKAITEIDRKGDGYINFEEFVELNTKGMDQ), 106–141 (DVLENLKDAFSVYDIDGNGSISAEELHEVLRSLGDE), and 142–177 (CSIAECRKMIGGVDKDGDGTIDFEEFKIMMTMGSRR). Positions 46, 48, 50, 52, and 57 each coordinate Ca(2+). Ca(2+) contacts are provided by Asp-119, Asp-121, Asn-123, Ser-125, Glu-130, Asp-155, Asp-157, Asp-159, Thr-161, and Glu-166.

Its function is as follows. Potential calcium sensor. The protein is Probable calcium-binding protein CML25 (CML25) of Arabidopsis thaliana (Mouse-ear cress).